Here is a 156-residue protein sequence, read N- to C-terminus: SsrA-binding protein (156 aa).

This sequence belongs to the SmpB family.

It localises to the cytoplasm. In terms of biological role, required for rescue of stalled ribosomes mediated by trans-translation. Binds to transfer-messenger RNA (tmRNA), required for stable association of tmRNA with ribosomes. tmRNA and SmpB together mimic tRNA shape, replacing the anticodon stem-loop with SmpB. tmRNA is encoded by the ssrA gene; the 2 termini fold to resemble tRNA(Ala) and it encodes a 'tag peptide', a short internal open reading frame. During trans-translation Ala-aminoacylated tmRNA acts like a tRNA, entering the A-site of stalled ribosomes, displacing the stalled mRNA. The ribosome then switches to translate the ORF on the tmRNA; the nascent peptide is terminated with the 'tag peptide' encoded by the tmRNA and targeted for degradation. The ribosome is freed to recommence translation, which seems to be the essential function of trans-translation. In Staphylococcus haemolyticus (strain JCSC1435), this protein is SsrA-binding protein.